Consider the following 386-residue polypeptide: Alanine racemase (386 aa).

The Proton acceptor; specific for D-alanine role is filled by lysine 48. An N6-(pyridoxal phosphate)lysine modification is found at lysine 48. A substrate-binding site is contributed by arginine 149. Residue tyrosine 278 is the Proton acceptor; specific for L-alanine of the active site. Position 326 (methionine 326) interacts with substrate.

This sequence belongs to the alanine racemase family. The cofactor is pyridoxal 5'-phosphate.

It carries out the reaction L-alanine = D-alanine. It participates in amino-acid biosynthesis; D-alanine biosynthesis; D-alanine from L-alanine: step 1/1. Its function is as follows. Catalyzes the interconversion of L-alanine and D-alanine. May also act on other amino acids. This chain is Alanine racemase (alr), found in Nostoc sp. (strain PCC 7120 / SAG 25.82 / UTEX 2576).